The sequence spans 151 residues: Probable cGMP 3',5'-cyclic phosphodiesterase subunit delta (151 aa).

This sequence belongs to the PDE6D/unc-119 family. As to quaternary structure, interacts with Pde6.

The protein localises to the nucleus. It is found in the cytoplasm. The sequence is that of Probable cGMP 3',5'-cyclic phosphodiesterase subunit delta from Drosophila mojavensis (Fruit fly).